The chain runs to 283 residues: MKKKKIFIGTIISCVMLALSACGSSDNVVTSKVGNVTEKELSKELRQQYGESTLYQMMLSKALLDKYKVSDEEAKKKVEEAKDKMGENFKSTLEQLGLKNEDELKEKMKPEIAFEKAIKATVTDKDVKNNYKPEMKVSHILVKDEKTAKEIKEKVNNGEDFAALANQYSEDTGSKEQGGEISGFAPGQTVKEFEEAAYKLDAGQVSDPVKTTYGYHIIKVTDKKELKPFDEVKDKIRKDIEQQRLQDTTGKWKQQVVNDLLKDADIKVNNKEFKDTFKFLEKK.

The signal sequence occupies residues 1 to 21 (MKKKKIFIGTIISCVMLALSA). Residue cysteine 22 is the site of N-palmitoyl cysteine attachment. The S-diacylglycerol cysteine moiety is linked to residue cysteine 22. The 91-residue stretch at 132–222 (KPEMKVSHIL…YGYHIIKVTD (91 aa)) folds into the PpiC domain.

It belongs to the PrsA family.

It localises to the cell membrane. The enzyme catalyses [protein]-peptidylproline (omega=180) = [protein]-peptidylproline (omega=0). In terms of biological role, plays a major role in protein secretion by helping the post-translocational extracellular folding of several secreted proteins. This is Foldase protein PrsA 3 (prsA3) from Bacillus cereus (strain ATCC 14579 / DSM 31 / CCUG 7414 / JCM 2152 / NBRC 15305 / NCIMB 9373 / NCTC 2599 / NRRL B-3711).